We begin with the raw amino-acid sequence, 582 residues long: Hemagglutinin-neuraminidase (582 aa).

The Intravirion segment spans residues 1–34 (MEPSKLFTMSDNATFAPGPVVNAADKKTFRTCFR). Residues 35 to 55 (ILVLSVQAVTLILVIVTLGEL) traverse the membrane as a helical segment. Residues 56 to 582 (VRMINDQGLS…LPVLTRLTIT (527 aa)) lie on the Virion surface side of the membrane. 3 disulfide bridges follow: cysteine 178/cysteine 202, cysteine 192/cysteine 253, and cysteine 244/cysteine 257. 2 N-linked (GlcNAc...) asparagine; by host glycosylation sites follow: asparagine 284 and asparagine 329. 3 disulfides stabilise this stretch: cysteine 350–cysteine 471, cysteine 382–cysteine 392, and cysteine 465–cysteine 475. N-linked (GlcNAc...) asparagine; by host glycans are attached at residues asparagine 400 and asparagine 448. Asparagine 507 carries an N-linked (GlcNAc...) asparagine; by host glycan. Cysteines 545 and 556 form a disulfide.

This sequence belongs to the paramyxoviruses hemagglutinin-neuraminidase family. In terms of assembly, homotetramer; composed of disulfide-linked homodimers. Interacts with F protein trimer.

The protein resides in the virion membrane. The protein localises to the host cell membrane. The enzyme catalyses Hydrolysis of alpha-(2-&gt;3)-, alpha-(2-&gt;6)-, alpha-(2-&gt;8)- glycosidic linkages of terminal sialic acid residues in oligosaccharides, glycoproteins, glycolipids, colominic acid and synthetic substrates.. In terms of biological role, attaches the virus to alpha-2,3-linked sialic acid-containing cell receptors and thereby initiating infection. Binding of HN protein to the receptor induces a conformational change that allows the F protein to trigger virion/cell membranes fusion. Binds to the glycan motifs sialyl Lewis (SLe) and GM2 ganglioside (GM2-glycan). Neuraminidase activity ensures the efficient spread of the virus by dissociating the mature virions from the neuraminic acid containing glycoproteins. The chain is Hemagglutinin-neuraminidase from Mumps orthorubulavirus (MuV).